The following is a 67-amino-acid chain: Large ribosomal subunit protein bL35 (67 aa).

Belongs to the bacterial ribosomal protein bL35 family.

This chain is Large ribosomal subunit protein bL35, found in Mesorhizobium japonicum (strain LMG 29417 / CECT 9101 / MAFF 303099) (Mesorhizobium loti (strain MAFF 303099)).